The following is a 503-amino-acid chain: Glutamate--tRNA ligase (503 aa).

The 'HIGH' region motif lies at 26 to 36 (PSPTGTPHVGL). The tract at residues 126–148 (TPEEVEARHRAAGRDPKLGYDNA) is disordered. Over residues 130 to 148 (VEARHRAAGRDPKLGYDNA) the composition is skewed to basic and acidic residues. The short motif at 270–274 (KLSKR) is the 'KMSKS' region element. An ATP-binding site is contributed by lysine 273.

It belongs to the class-I aminoacyl-tRNA synthetase family. Glutamate--tRNA ligase type 1 subfamily. Monomer.

Its subcellular location is the cytoplasm. It carries out the reaction tRNA(Glu) + L-glutamate + ATP = L-glutamyl-tRNA(Glu) + AMP + diphosphate. Its function is as follows. Catalyzes the attachment of glutamate to tRNA(Glu) in a two-step reaction: glutamate is first activated by ATP to form Glu-AMP and then transferred to the acceptor end of tRNA(Glu). The protein is Glutamate--tRNA ligase of Saccharopolyspora erythraea (strain ATCC 11635 / DSM 40517 / JCM 4748 / NBRC 13426 / NCIMB 8594 / NRRL 2338).